Consider the following 173-residue polypeptide: MKTWYMVVVIGFLATLAQTSLALKEEDCEVCVKTVRRFADSLDESTKKDYKQIETAFKKFCKTQKNKEHRFCYYLGGLEESATGILNELSKPLSWSMPAEKVCEKLKKKDAQVCDLRYEKQIDLNSVDLKKLKVRDLKKILNDWDESCDGCLEKGDFIKRIEELKPKYSRSEL.

Residues 1 to 22 (MKTWYMVVVIGFLATLAQTSLA) form the signal peptide. Intrachain disulfides connect Cys28/Cys114, Cys31/Cys103, Cys61/Cys72, and Cys148/Cys151.

The protein belongs to the ARMET family.

The protein localises to the secreted. Functionally, required during the maturation of the embryonic nervous system for maintenance of neuronal and cuticular connectivity. Essential for maintenance of dopaminergic neurons and dopamine levels. The polypeptide is Mesencephalic astrocyte-derived neurotrophic factor homolog (Drosophila erecta (Fruit fly)).